A 200-amino-acid polypeptide reads, in one-letter code: NADH-quinone oxidoreductase subunit C (200 aa).

It belongs to the complex I 30 kDa subunit family. In terms of assembly, NDH-1 is composed of 14 different subunits. Subunits NuoB, C, D, E, F, and G constitute the peripheral sector of the complex.

It localises to the cell inner membrane. It carries out the reaction a quinone + NADH + 5 H(+)(in) = a quinol + NAD(+) + 4 H(+)(out). In terms of biological role, NDH-1 shuttles electrons from NADH, via FMN and iron-sulfur (Fe-S) centers, to quinones in the respiratory chain. The immediate electron acceptor for the enzyme in this species is believed to be ubiquinone. Couples the redox reaction to proton translocation (for every two electrons transferred, four hydrogen ions are translocated across the cytoplasmic membrane), and thus conserves the redox energy in a proton gradient. In Ruegeria pomeroyi (strain ATCC 700808 / DSM 15171 / DSS-3) (Silicibacter pomeroyi), this protein is NADH-quinone oxidoreductase subunit C.